The following is a 472-amino-acid chain: Siroheme synthase 1 (472 aa).

A precorrin-2 dehydrogenase /sirohydrochlorin ferrochelatase region spans residues 1-203 (MDYLPLFADL…GQLAQAEEEL (203 aa)). NAD(+) contacts are provided by residues 22-23 (EV) and 43-44 (QT). Residue serine 128 is modified to Phosphoserine. Residues 215-472 (GEVALVGAGP…AISPSVVNLA (258 aa)) form a uroporphyrinogen-III C-methyltransferase region. Proline 224 provides a ligand contact to S-adenosyl-L-methionine. Aspartate 247 serves as the catalytic Proton acceptor. Lysine 269 functions as the Proton donor in the catalytic mechanism. Residues 300–302 (GGD), isoleucine 305, 330–331 (TA), methionine 382, and glycine 411 each bind S-adenosyl-L-methionine.

In the N-terminal section; belongs to the precorrin-2 dehydrogenase / sirohydrochlorin ferrochelatase family. It in the C-terminal section; belongs to the precorrin methyltransferase family.

It catalyses the reaction uroporphyrinogen III + 2 S-adenosyl-L-methionine = precorrin-2 + 2 S-adenosyl-L-homocysteine + H(+). The enzyme catalyses precorrin-2 + NAD(+) = sirohydrochlorin + NADH + 2 H(+). It carries out the reaction siroheme + 2 H(+) = sirohydrochlorin + Fe(2+). Its pathway is cofactor biosynthesis; adenosylcobalamin biosynthesis; precorrin-2 from uroporphyrinogen III: step 1/1. The protein operates within cofactor biosynthesis; adenosylcobalamin biosynthesis; sirohydrochlorin from precorrin-2: step 1/1. It participates in porphyrin-containing compound metabolism; siroheme biosynthesis; precorrin-2 from uroporphyrinogen III: step 1/1. It functions in the pathway porphyrin-containing compound metabolism; siroheme biosynthesis; siroheme from sirohydrochlorin: step 1/1. Its pathway is porphyrin-containing compound metabolism; siroheme biosynthesis; sirohydrochlorin from precorrin-2: step 1/1. Multifunctional enzyme that catalyzes the SAM-dependent methylations of uroporphyrinogen III at position C-2 and C-7 to form precorrin-2 via precorrin-1. Then it catalyzes the NAD-dependent ring dehydrogenation of precorrin-2 to yield sirohydrochlorin. Finally, it catalyzes the ferrochelation of sirohydrochlorin to yield siroheme. The chain is Siroheme synthase 1 from Yersinia enterocolitica serotype O:8 / biotype 1B (strain NCTC 13174 / 8081).